Reading from the N-terminus, the 319-residue chain is Aspartate carbamoyltransferase catalytic subunit (319 aa).

Positions 65 and 66 each coordinate carbamoyl phosphate. L-aspartate is bound at residue lysine 93. Carbamoyl phosphate-binding residues include arginine 115, histidine 143, and glutamine 146. L-aspartate contacts are provided by arginine 176 and arginine 230. Carbamoyl phosphate-binding residues include glycine 271 and proline 272.

Belongs to the aspartate/ornithine carbamoyltransferase superfamily. ATCase family. In terms of assembly, heterododecamer (2C3:3R2) of six catalytic PyrB chains organized as two trimers (C3), and six regulatory PyrI chains organized as three dimers (R2).

The enzyme catalyses carbamoyl phosphate + L-aspartate = N-carbamoyl-L-aspartate + phosphate + H(+). Its pathway is pyrimidine metabolism; UMP biosynthesis via de novo pathway; (S)-dihydroorotate from bicarbonate: step 2/3. Catalyzes the condensation of carbamoyl phosphate and aspartate to form carbamoyl aspartate and inorganic phosphate, the committed step in the de novo pyrimidine nucleotide biosynthesis pathway. This is Aspartate carbamoyltransferase catalytic subunit from Chelativorans sp. (strain BNC1).